A 437-amino-acid chain; its full sequence is Eukaryotic peptide chain release factor subunit 1 (437 aa).

Glutamine 182 is modified (N5-methylglutamine). Lysine 331 participates in a covalent cross-link: Glycyl lysine isopeptide (Lys-Gly) (interchain with G-Cter in ubiquitin). A Phosphoserine modification is found at serine 421.

The protein belongs to the eukaryotic release factor 1 family. As to quaternary structure, component of the eRF1-eRF3-GTP ternary complex, composed of SUP45/eRF1, SUP35/eRF3 and GTP. Interacts with TPA1. N5-methylated on Gln-182 by MTQ2.

The protein localises to the cytoplasm. Component of the eRF1-eRF3-GTP ternary complex, a ternary complex that mediates translation termination in response to the termination codons. The eRF1-eRF3-GTP complex binds to a stop codon in the ribosomal A-site. SUP45/eRF1 is responsible for stop codon recognition and inducing hydrolysis of peptidyl-tRNA. Following GTP hydrolysis by SUP35/eRF3, SUP35/eRF3 dissociates, permitting SUP45/eRF1 to accommodate fully in the A-site and mediate hydrolysis of peptidyl-tRNA. This is Eukaryotic peptide chain release factor subunit 1 (SUP45) from Saccharomyces cerevisiae (strain ATCC 204508 / S288c) (Baker's yeast).